Here is a 115-residue protein sequence, read N- to C-terminus: Ribonuclease P protein component (115 aa).

The protein belongs to the RnpA family. In terms of assembly, consists of a catalytic RNA component (M1 or rnpB) and a protein subunit.

It carries out the reaction Endonucleolytic cleavage of RNA, removing 5'-extranucleotides from tRNA precursor.. Functionally, RNaseP catalyzes the removal of the 5'-leader sequence from pre-tRNA to produce the mature 5'-terminus. It can also cleave other RNA substrates such as 4.5S RNA. The protein component plays an auxiliary but essential role in vivo by binding to the 5'-leader sequence and broadening the substrate specificity of the ribozyme. The sequence is that of Ribonuclease P protein component from Staphylococcus epidermidis (strain ATCC 35984 / DSM 28319 / BCRC 17069 / CCUG 31568 / BM 3577 / RP62A).